Here is an 89-residue protein sequence, read N- to C-terminus: Signal recognition particle 19 kDa protein (89 aa).

Belongs to the SRP19 family. Part of the signal recognition particle protein translocation system, which is composed of SRP and FtsY. Archaeal SRP consists of a 7S RNA molecule of 300 nucleotides and two protein subunits: SRP54 and SRP19.

It is found in the cytoplasm. Its function is as follows. Involved in targeting and insertion of nascent membrane proteins into the cytoplasmic membrane. Binds directly to 7S RNA and mediates binding of the 54 kDa subunit of the SRP. This is Signal recognition particle 19 kDa protein from Methanococcus maripaludis (strain C5 / ATCC BAA-1333).